The primary structure comprises 167 residues: Peptidoglycan L-alanyl-D-glutamate endopeptidase CwlK (167 aa).

The N-terminal stretch at methionine 1 to histidine 26 is a signal peptide.

The protein belongs to the peptidase M15C family.

The protein resides in the cell membrane. Functionally, cleaves the linkage of the L-alanine-D-glutamic acid of B.subtilis cell wall. This is Peptidoglycan L-alanyl-D-glutamate endopeptidase CwlK (cwlK) from Bacillus subtilis (strain 168).